The primary structure comprises 296 residues: Ethanolamine ammonia-lyase small subunit (296 aa).

Residues V209 and E230 each contribute to the adenosylcob(III)alamin site.

Belongs to the EutC family. In terms of assembly, the basic unit is a heterodimer which dimerizes to form tetramers. The heterotetramers trimerize; 6 large subunits form a core ring with 6 small subunits projecting outwards. Adenosylcob(III)alamin is required as a cofactor.

It is found in the bacterial microcompartment. The catalysed reaction is ethanolamine = acetaldehyde + NH4(+). It participates in amine and polyamine degradation; ethanolamine degradation. In terms of biological role, catalyzes the deamination of various vicinal amino-alcohols to oxo compounds. Allows this organism to utilize ethanolamine as the sole source of nitrogen and carbon in the presence of external vitamin B12. The chain is Ethanolamine ammonia-lyase small subunit from Lachnoclostridium phytofermentans (strain ATCC 700394 / DSM 18823 / ISDg) (Clostridium phytofermentans).